Here is an 800-residue protein sequence, read N- to C-terminus: Serine/threonine-protein kinase KIN4 (800 aa).

Residues 46-313 (YIIGSTLGEG…LQTIKRHVWL (268 aa)) enclose the Protein kinase domain. ATP contacts are provided by residues 52 to 60 (LGEGEFGKV) and lysine 80. Residue aspartate 175 is the Proton acceptor of the active site. 2 disordered regions span residues 331–397 (LQKE…GSKV) and 438–487 (SARH…TSFT). Low complexity predominate over residues 348-358 (STYSSSASSYS). Phosphoserine is present on residues serine 365 and serine 388. 2 stretches are compositionally biased toward polar residues: residues 380–395 (QLAT…STGS) and 459–473 (GSPT…PSSK). A Phosphoserine modification is found at serine 521. Disordered regions lie at residues 629 to 661 (EPTN…DKDS) and 678 to 754 (SLNG…PGRS). Residues 678-721 (SLNGSRSTVESRTSKGNAPPVSSRNPSGQSNRSNIKITQQQPRN) are compositionally biased toward polar residues. A compositionally biased stretch (basic and acidic residues) spans 727–740 (PNPDKKINDNRIRD). The residue at position 748 (serine 748) is a Phosphoserine.

Belongs to the protein kinase superfamily. Ser/Thr protein kinase family.

The catalysed reaction is L-seryl-[protein] + ATP = O-phospho-L-seryl-[protein] + ADP + H(+). It catalyses the reaction L-threonyl-[protein] + ATP = O-phospho-L-threonyl-[protein] + ADP + H(+). Its function is as follows. This protein is probably a serine/threonine protein kinase. This chain is Serine/threonine-protein kinase KIN4 (KIN4), found in Saccharomyces cerevisiae (strain ATCC 204508 / S288c) (Baker's yeast).